The primary structure comprises 339 residues: Immunoglobulin-binding protein 1 (339 aa).

Ala2 carries the post-translational modification N-acetylalanine. The UIM domain occupies 46 to 60 (LDLLEKAAEMLSQLD). The tract at residues 98–202 (RLDHLQRARE…YLLHLQRWID (105 aa)) is interaction with PPP2CA. Disordered regions lie at residues 221 to 243 (RDSS…VKPF) and 289 to 339 (APEE…QNMG). Residues 225–290 (REASTSNSSR…PDQGIAKAAP (66 aa)) are interaction with MID1. Lys241 is subject to N6-acetyllysine. Positions 301–312 (EEQEEKEEEDDE) are enriched in acidic residues. Residues 313 to 329 (QTLHRAREWDDWKDTHP) show a composition bias toward basic and acidic residues.

This sequence belongs to the IGBP1/TAP42 family. In terms of assembly, interacts with partially folded PPP2CA, but not with the fully active protein. Interacts with PPP2CB, and with PP4 and PP6. Interacts with MID1 and MID2. Interacts with ubiquitin. In terms of processing, phosphorylated. Post-translationally, monoubiquitination by MID1 triggers calpain-mediated cleavage and switches IGBP1 activity from protective to destructive. Ubiquitously expressed with highest levels in heart, skeletal muscle and pancreas.

The protein resides in the cytoplasm. Associated to surface IgM-receptor; may be involved in signal transduction. Involved in regulation of the catalytic activity of the phosphatases PP2A, PP4 and PP6 by protecting their partially folded catalytic subunits from degradative polyubiquitination until they associate with regulatory subunits. The protein is Immunoglobulin-binding protein 1 (IGBP1) of Homo sapiens (Human).